An 84-amino-acid chain; its full sequence is Small ribosomal subunit protein uS17 (84 aa).

The protein belongs to the universal ribosomal protein uS17 family. Part of the 30S ribosomal subunit.

In terms of biological role, one of the primary rRNA binding proteins, it binds specifically to the 5'-end of 16S ribosomal RNA. The sequence is that of Small ribosomal subunit protein uS17 from Borreliella afzelii (strain PKo) (Borrelia afzelii).